Reading from the N-terminus, the 283-residue chain is D-alanine aminotransferase (283 aa).

Y31 is a substrate binding site. R50 is a pyridoxal 5'-phosphate binding site. The substrate site is built by R98 and H100. K144 acts as the Proton acceptor in catalysis. K144 bears the N6-(pyridoxal phosphate)lysine mark. E176 contacts pyridoxal 5'-phosphate.

It belongs to the class-IV pyridoxal-phosphate-dependent aminotransferase family. Homodimer. Pyridoxal 5'-phosphate serves as cofactor.

The catalysed reaction is D-alanine + 2-oxoglutarate = D-glutamate + pyruvate. Acts on the D-isomers of alanine, leucine, aspartate, glutamate, aminobutyrate, norvaline and asparagine. The enzyme transfers an amino group from a substrate D-amino acid to the pyridoxal phosphate cofactor to form pyridoxamine and an alpha-keto acid in the first half-reaction. The second half-reaction is the reverse of the first, transferring the amino group from the pyridoxamine to a second alpha-keto acid to form the product D-amino acid via a ping-pong mechanism. This is an important process in the formation of D-alanine and D-glutamate, which are essential bacterial cell wall components. This is D-alanine aminotransferase (dat) from Bacillus licheniformis.